We begin with the raw amino-acid sequence, 352 residues long: tRNA uridine(34) hydroxylase (352 aa).

Residues 144–238 form the Rhodanese domain; the sequence is SDPDVILIDT…YLEEVPASDS (95 aa). The active-site Cysteine persulfide intermediate is Cys-198.

Belongs to the TrhO family.

The catalysed reaction is uridine(34) in tRNA + AH2 + O2 = 5-hydroxyuridine(34) in tRNA + A + H2O. In terms of biological role, catalyzes oxygen-dependent 5-hydroxyuridine (ho5U) modification at position 34 in tRNAs. This Psychrobacter cryohalolentis (strain ATCC BAA-1226 / DSM 17306 / VKM B-2378 / K5) protein is tRNA uridine(34) hydroxylase.